Reading from the N-terminus, the 347-residue chain is Oocyte-specific homeobox protein 6 (347 aa).

Disordered regions lie at residues 1-20 (MLQY…HSKF) and 54-86 (PRSP…IQMQ). The span at 72 to 85 (QESQGPSGKSSIQM) shows a compositional bias: polar residues. Positions 145 to 204 (HRKIRTVYTEEQKCVLKKHFHKCTYPSREQRMALAVLVGVTANEIQIWFKNHRAKSKRES) form a DNA-binding region, homeobox.

It belongs to the paired homeobox family. Obox subfamily. Specifically expressed in early embryos.

The protein resides in the nucleus. Functionally, transcription factor required for zygotic genome activation (ZGA), a critical event in early embryonic development during which the developmental control passes from maternally provided mRNAs to the expression of the zygotic genome after fertilization. The chain is Oocyte-specific homeobox protein 6 from Mus musculus (Mouse).